Here is a 908-residue protein sequence, read N- to C-terminus: 26S proteasome non-ATPase regulatory subunit 2 (908 aa).

Methionine 1 bears the N-acetylmethionine mark. The disordered stretch occupies residues 1–52; that stretch reads MEEGGRDKAPVQPQQSPAAAPGGTDEKPSGKERRDAGDKDKEQELSEEDKQL. Low complexity predominate over residues 10-21; sequence PVQPQQSPAAAP. At serine 16 the chain carries Phosphoserine. Phosphothreonine is present on threonine 24. Basic and acidic residues predominate over residues 24-52; it reads TDEKPSGKERRDAGDKDKEQELSEEDKQL. A phosphoserine mark is found at serine 29 and serine 147. Tyrosine 194 carries the post-translational modification Phosphotyrosine. Phosphoserine is present on residues serine 361 and serine 363. 5 PC repeats span residues 409-442, 443-479, 480-514, 517-551, and 560-589; these read SAAA…YIKS, GALL…TMRL, GSIF…SMEV, VTAL…TELK, and LGLG…PFRS. Lysine 551 carries the post-translational modification N6-acetyllysine. A compositionally biased stretch (basic and acidic residues) spans 623 to 643; sequence KEKEEDKDKKEKKDKDKKEAP. A disordered region spans residues 623–645; sequence KEKEEDKDKKEKKDKDKKEAPAD. PC repeat units lie at residues 692–723 and 742–757; these read LALA…EVSY and AAML…KDPN. The segment at 708-903 is required for interaction with UBLCP1; the sequence is DTLSKFSHDA…LEGFVILRKN (196 aa).

The protein belongs to the proteasome subunit S2 family. Component of the 19S proteasome regulatory particle complex. The 26S proteasome consists of a 20S core particle (CP) and two 19S regulatory subunits (RP). The regulatory particle is made of a lid composed of 9 subunits, a base containing 6 ATPases and few additional components including PSMD2. Interacts with RPGRIP1L. Interacts with CRY1 in a KDM8-dependent manner. Interacts (via C-terminus) with phosphatase UBLCP1 (via ubiquitin-like domain); the interaction recruits UBLCP1 to the 19S regulatory particle where it dephosphorylates 19S subunit PSMC2/RPT1 which impairs PSMC2 ATPase activity and disrupts 26S proteasome assembly. As to expression, found in skeletal muscle, liver, heart, brain, kidney, pancreas, lung and placenta.

In terms of biological role, component of the 26S proteasome, a multiprotein complex involved in the ATP-dependent degradation of ubiquitinated proteins. This complex plays a key role in the maintenance of protein homeostasis by removing misfolded or damaged proteins, which could impair cellular functions, and by removing proteins whose functions are no longer required. Therefore, the proteasome participates in numerous cellular processes, including cell cycle progression, apoptosis, or DNA damage repair. Binds to the intracellular domain of tumor necrosis factor type 1 receptor. The binding domain of TRAP1 and TRAP2 resides outside the death domain of TNFR1. In Homo sapiens (Human), this protein is 26S proteasome non-ATPase regulatory subunit 2 (PSMD2).